Here is a 599-residue protein sequence, read N- to C-terminus: Elongation factor 4 (599 aa).

One can recognise a tr-type G domain in the interval 5 to 187; it reads SHIRNFSIIA…RLVTAIPAPE (183 aa). Residues 17 to 22 and 134 to 137 each bind GTP; these read DHGKST and NKMD.

This sequence belongs to the TRAFAC class translation factor GTPase superfamily. Classic translation factor GTPase family. LepA subfamily.

It is found in the cell inner membrane. The enzyme catalyses GTP + H2O = GDP + phosphate + H(+). Required for accurate and efficient protein synthesis under certain stress conditions. May act as a fidelity factor of the translation reaction, by catalyzing a one-codon backward translocation of tRNAs on improperly translocated ribosomes. Back-translocation proceeds from a post-translocation (POST) complex to a pre-translocation (PRE) complex, thus giving elongation factor G a second chance to translocate the tRNAs correctly. Binds to ribosomes in a GTP-dependent manner. The sequence is that of Elongation factor 4 from Pseudomonas aeruginosa (strain LESB58).